A 141-amino-acid chain; its full sequence is Large ribosomal subunit protein uL16 (141 aa).

It belongs to the universal ribosomal protein uL16 family. Part of the 50S ribosomal subunit.

In terms of biological role, binds 23S rRNA and is also seen to make contacts with the A and possibly P site tRNAs. This chain is Large ribosomal subunit protein uL16, found in Sulfurimonas denitrificans (strain ATCC 33889 / DSM 1251) (Thiomicrospira denitrificans (strain ATCC 33889 / DSM 1251)).